Here is a 195-residue protein sequence, read N- to C-terminus: Imidazoleglycerol-phosphate dehydratase (195 aa).

The protein belongs to the imidazoleglycerol-phosphate dehydratase family.

The protein localises to the cytoplasm. The enzyme catalyses D-erythro-1-(imidazol-4-yl)glycerol 3-phosphate = 3-(imidazol-4-yl)-2-oxopropyl phosphate + H2O. It functions in the pathway amino-acid biosynthesis; L-histidine biosynthesis; L-histidine from 5-phospho-alpha-D-ribose 1-diphosphate: step 6/9. The chain is Imidazoleglycerol-phosphate dehydratase from Hydrogenovibrio crunogenus (strain DSM 25203 / XCL-2) (Thiomicrospira crunogena).